The sequence spans 222 residues: Collectrin (222 aa).

The first 14 residues, 1-14 (MLWLLFFLVTAIHA), serve as a signal peptide directing secretion. At 15–141 (DLCRPDAENA…LAPPTDPSVP (127 aa)) the chain is on the extracellular side. The Collectrin-like domain occupies 21-222 (AENAFKVRLS…VTEDERLTPL (202 aa)). N-linked (GlcNAc...) asparagine glycans are attached at residues asparagine 76 and asparagine 93. The chain crosses the membrane as a helical span at residues 142-162 (IWIIIFGVIFCIVLVATMLLI). Residues 163-222 (ISGIRQHRRKNKGPSEMEDSEDKCENVITIENGIPCDPLDMKGGHINDAFVTEDERLTPL) lie on the Cytoplasmic side of the membrane. 2 positions are modified to phosphothreonine: threonine 214 and threonine 220.

It belongs to the CLTRN family. As to quaternary structure, monomer. Homodimer; dimerization prevents CLTRN cleavage by BACE2. Interacts with SLC6A18; this interaction regulates the trafficking of SLC6A18 to the cell membrane and its amino acid transporter activity. Interacts with SLC6A19; this interaction regulates the trafficking of SLC6A19 to the cell membrane and its amino acid transporter activity. Interacts with SNAPIN. Post-translationally, glycosylated. Glycosylation is required for plasma membrane localization and for its cleavage by BACE2. In terms of processing, proteolytically processed in pancreatic beta cells by BACE2 leading to the generation and extracellular release of soluble CLTRN, and a corresponding cell-associated C-terminal fragment which is later cleaved by gamma-secretase. This shedding process inactivates CLTRN. Three cleavage sites have been identified for BACE2, two clustered sites after Phe-116 and Leu-118 and a more membrane proximal site at Phe-125; the preferred BACE2 cleavage site seems to be between Phe-125 and Leu-126, Phe-116 and Leu-118 act as alternative sites.

The protein localises to the cell membrane. Functionally, plays an important role in amino acid transport by acting as binding partner of amino acid transporters SLC6A18 and SLC6A19, regulating their trafficking on the cell surface and their activity. May also play a role in trafficking of amino acid transporters SLC3A1 and SLC7A9 to the renal cortical cell membrane. Regulator of SNARE complex function. Stimulator of beta cell replication. The sequence is that of Collectrin (CLTRN) from Bos taurus (Bovine).